The chain runs to 649 residues: Drebrin (649 aa).

Ala-2 is subject to N-acetylalanine. Residues Gly-3–Ser-134 form the ADF-H domain. A phosphoserine mark is found at Ser-141 and Ser-142. 2 stretches are compositionally biased toward basic and acidic residues: residues Gln-208–Arg-236 and Asp-288–Glu-298. Disordered stretches follow at residues Gln-208–Asp-420, Asp-477–Thr-502, and Glu-538–Val-620. Phosphothreonine is present on residues Thr-331 and Thr-335. Residues Pro-334–Val-348 are compositionally biased toward polar residues. A phosphoserine mark is found at Ser-337, Ser-339, and Ser-345. Thr-346 carries the post-translational modification Phosphothreonine. Over residues Gln-363–Ala-374 the composition is skewed to pro residues. At Ser-416 the chain carries Phosphoserine. Thr-497 bears the Phosphothreonine mark. Residues Asn-582–Ser-594 are compositionally biased toward polar residues. Ser-601 carries the post-translational modification Phosphoserine.

Interacts with RUFY3. Interacts with CXCR4; this interaction is enhanced by antigenic stimulation. Interacts (via ADF-H domain) with ZMYND8 (via N-terminus); the interaction leads to sequestering of ZMYND8 in the cytoplasm. As to expression, expressed in the brain, with expression in the molecular layer of the dentate gyrus, stratum pyramidale, and stratum radiatum of the hippocampus (at protein level). Also expressed in the terminal varicosities distributed along dendritic trees of pyramidal cells in CA4 and CA3 of the hippocampus (at protein level). Expressed in pyramidal cells in CA2, CA1 and the subiculum of the hippocampus (at protein level). Expressed in peripheral blood lymphocytes, including T-cells (at protein level). Expressed in the brain. Expressed in the heart, placenta, lung, skeletal muscle, kidney, pancreas, skin fibroblasts, gingival fibroblasts and bone-derived cells.

Its subcellular location is the cytoplasm. The protein localises to the cell projection. It is found in the dendrite. The protein resides in the cell cortex. It localises to the cell junction. Its subcellular location is the growth cone. In terms of biological role, actin cytoskeleton-organizing protein that plays a role in the formation of cell projections. Required for actin polymerization at immunological synapses (IS) and for the recruitment of the chemokine receptor CXCR4 to IS. Plays a role in dendritic spine morphogenesis and organization, including the localization of the dopamine receptor DRD1 to the dendritic spines. Involved in memory-related synaptic plasticity in the hippocampus. In Homo sapiens (Human), this protein is Drebrin (DBN1).